Consider the following 103-residue polypeptide: Large ribosomal subunit protein uL24 (103 aa).

It belongs to the universal ribosomal protein uL24 family. Part of the 50S ribosomal subunit.

In terms of biological role, one of two assembly initiator proteins, it binds directly to the 5'-end of the 23S rRNA, where it nucleates assembly of the 50S subunit. One of the proteins that surrounds the polypeptide exit tunnel on the outside of the subunit. In Latilactobacillus sakei subsp. sakei (strain 23K) (Lactobacillus sakei subsp. sakei), this protein is Large ribosomal subunit protein uL24.